A 211-amino-acid chain; its full sequence is MNKLIDFSKGLVPVILQHAQTDSVLMLGYMNEEAYQKTLKEKKVTFFSRSKQRLWTKGETSGHFQHVESIHLDCDQDAILIKVMPQGPTCHTGSLSCFNSEIESRFKIQALAQTIHQSAKSNQSNSYTQYLLKEGIEKISKKFGEEAFEVVIGAIKHNREEVINETADVMYHLFVLLHSLDIPFSEVEQVLAHRHQKRNNFKGERKKVQEW.

Residues 1–107 (MNKLIDFSKG…FNSEIESRFK (107 aa)) form a phosphoribosyl-AMP cyclohydrolase region. The tract at residues 108 to 211 (IQALAQTIHQ…KGERKKVQEW (104 aa)) is phosphoribosyl-ATP pyrophosphohydrolase.

It in the N-terminal section; belongs to the PRA-CH family. The protein in the C-terminal section; belongs to the PRA-PH family.

The protein localises to the cytoplasm. The enzyme catalyses 1-(5-phospho-beta-D-ribosyl)-ATP + H2O = 1-(5-phospho-beta-D-ribosyl)-5'-AMP + diphosphate + H(+). The catalysed reaction is 1-(5-phospho-beta-D-ribosyl)-5'-AMP + H2O = 1-(5-phospho-beta-D-ribosyl)-5-[(5-phospho-beta-D-ribosylamino)methylideneamino]imidazole-4-carboxamide. The protein operates within amino-acid biosynthesis; L-histidine biosynthesis; L-histidine from 5-phospho-alpha-D-ribose 1-diphosphate: step 2/9. It functions in the pathway amino-acid biosynthesis; L-histidine biosynthesis; L-histidine from 5-phospho-alpha-D-ribose 1-diphosphate: step 3/9. In Staphylococcus epidermidis (strain ATCC 12228 / FDA PCI 1200), this protein is Histidine biosynthesis bifunctional protein HisIE.